The primary structure comprises 101 residues: uncharacterized protein (101 aa).

This is an uncharacterized protein from Mycobacterium tuberculosis (strain CDC 1551 / Oshkosh).